The following is a 450-amino-acid chain: MNLETGSRGSEFGMSAVSCGNGKLRQWLIDQIDSGKYPGLVWENEEKSVFRIPWKHAGKQDYNREEDAALFKAWALFKGKFREGIDKPDPPTWKTRLRCALNKSNDFEELVERSQLDISDPYKVYRIVPEGAKKGAKQLTLDDTQMAMGHPYPMTAPYGSLPAQQVHNYMMPPHDRSWRDYAPDQSHPEIPYQCPVTFGPRGHHWQGPSCENGCQVTGTFYACAPPESQAPGIPIEPSIRSAEALALSDCRLHICLYYRDILVKELTTTSPEGCRISHGHTYDVSNLDQVLFPYPDDNGQRKNIEKLLSHLERGLVLWMAPDGLYAKRLCQSRIYWDGPLALCSDRPNKLERDQTCKLFDTQQFLSELQVFAHHGRPAPRFQVTLCFGEEFPDPQRQRKLITAHVEPLLARQLYYFAQQNTGHFLRGYELPEHVTTPDYHRSLRHSSIQE.

The segment at residues 21–129 (NGKLRQWLID…DPYKVYRIVP (109 aa)) is a DNA-binding region (IRF tryptophan pentad repeat). A phosphoserine; by ROCK2 mark is found at Ser-446 and Ser-447.

It belongs to the IRF family. In terms of assembly, interacts with SPIB and DEF6. Interacts with the BATF-JUNB heterodimer. Interacts with BATF (via bZIP domain); the interaction is direct. Directly interacts with NLRP3 in the nucleus of Th2 cells; this interaction enhances IRF4 ability to bind to the IL4 promoter and is required for optimal IRF4-dependent IL4 transcription. Interacts with SPI1. In terms of processing, phosphorylation by ROCK2 regulates IL-17 and IL-21 production. Lymphoid cells.

Its subcellular location is the nucleus. It localises to the cytoplasm. Its function is as follows. Transcriptional activator. Binds to the interferon-stimulated response element (ISRE) of the MHC class I promoter. Binds the immunoglobulin lambda light chain enhancer, together with PU.1. Probably plays a role in ISRE-targeted signal transduction mechanisms specific to lymphoid cells. Involved in CD8(+) dendritic cell differentiation by forming a complex with the BATF-JUNB heterodimer in immune cells, leading to recognition of AICE sequence (5'-TGAnTCA/GAAA-3'), an immune-specific regulatory element, followed by cooperative binding of BATF and IRF4 and activation of genes. This Mus musculus (Mouse) protein is Interferon regulatory factor 4.